Reading from the N-terminus, the 170-residue chain is Adenine phosphoribosyltransferase (170 aa).

It belongs to the purine/pyrimidine phosphoribosyltransferase family. In terms of assembly, homodimer.

The protein localises to the cytoplasm. It carries out the reaction AMP + diphosphate = 5-phospho-alpha-D-ribose 1-diphosphate + adenine. It participates in purine metabolism; AMP biosynthesis via salvage pathway; AMP from adenine: step 1/1. Functionally, catalyzes a salvage reaction resulting in the formation of AMP, that is energically less costly than de novo synthesis. The chain is Adenine phosphoribosyltransferase from Thermosynechococcus vestitus (strain NIES-2133 / IAM M-273 / BP-1).